Consider the following 547-residue polypeptide: T-complex protein 1 subunit alpha (547 aa).

The protein belongs to the TCP-1 chaperonin family. As to quaternary structure, heterooligomeric complex of about 850 to 900 kDa that forms two stacked rings, 12 to 16 nm in diameter.

The protein resides in the cytoplasm. Molecular chaperone; assists the folding of proteins upon ATP hydrolysis. Known to play a role, in vitro, in the folding of actin and tubulin. The protein is T-complex protein 1 subunit alpha of Tetrahymena pyriformis.